We begin with the raw amino-acid sequence, 156 residues long: Snaclec trimecetin subunit alpha (156 aa).

The N-terminal stretch at Met1–Ala23 is a signal peptide. Intrachain disulfides connect Cys25–Cys36, Cys53–Cys150, and Cys125–Cys142. Positions Phe32–Lys151 constitute a C-type lectin domain.

The protein belongs to the snaclec family. In terms of assembly, heterodimer of subunits alpha and beta; disulfide-linked. Expressed by the venom gland.

It localises to the secreted. Snaclec that induces platelet aggregation in either human platelet rich plasma (PRP) or washed platelet suspensions. It causes aggregation in a dose-dependent manner even in the absence of various platelet agonists such as ADP or von Willebrand factor (vWF). Interestingly, it does not induce aggregation in rabbit PRP. A monoclonal antibody against the platelet GPIb receptor blocks the aggregation induced by trimecetin, suggesting that it acts by binding to GPIb (GP1BA/GP1BB). The protein is Snaclec trimecetin subunit alpha of Protobothrops mucrosquamatus (Taiwan habu).